The sequence spans 103 residues: Probable pterin-4-alpha-carbinolamine dehydratase (103 aa).

The protein belongs to the pterin-4-alpha-carbinolamine dehydratase family.

The catalysed reaction is (4aS,6R)-4a-hydroxy-L-erythro-5,6,7,8-tetrahydrobiopterin = (6R)-L-erythro-6,7-dihydrobiopterin + H2O. Its function is as follows. Involved in tetrahydrobiopterin biosynthesis. This Hypsibius exemplaris (Freshwater tardigrade) protein is Probable pterin-4-alpha-carbinolamine dehydratase (Pcd).